A 679-amino-acid chain; its full sequence is Single-strand DNA endonuclease ASTE1 (679 aa).

Residues 351-400 (TILPTQVENMQQPNAHRISQPIRQIIYGLLLNASPHLDKTSWNALPPQPL) form an interaction with SHLD2 region. Positions 625–645 (RSNSKKKRQKKQNTSCSKNRG) are disordered. The span at 626–635 (SNSKKKRQKK) shows a compositional bias: basic residues.

This sequence belongs to the asteroid family. Interacts with SHLD1, SHLD2, SHLD3, RIF1 and MAD2L2/REV7.

Structure-specific DNA endonuclease that specifically cleaves single-stranded DNA and 3' overhang DNA. Contributes to the control of DNA double-strand break repair choice by antagonizing BRCA1-dependent homologous recombination (HR) and promoting non-homologous end-joining (NHEJ). Recruited to the single-stranded DNA ends by SHLD2 and cleaves the 3' exposed DNA ends, therefore inhibiting DNA end resection (necessary for HR) and promoting DNA end protection (necessary for NHEJ). The sequence is that of Single-strand DNA endonuclease ASTE1 (ASTE1) from Pongo abelii (Sumatran orangutan).